Here is a 254-residue protein sequence, read N- to C-terminus: Ribosomal RNA small subunit methyltransferase G (254 aa).

Residues glycine 92, alanine 143–glutamate 144, and arginine 156 contribute to the S-adenosyl-L-methionine site.

The protein belongs to the methyltransferase superfamily. RNA methyltransferase RsmG family.

Its subcellular location is the cytoplasm. In terms of biological role, specifically methylates the N7 position of a guanine in 16S rRNA. This is Ribosomal RNA small subunit methyltransferase G from Leptospira interrogans serogroup Icterohaemorrhagiae serovar copenhageni (strain Fiocruz L1-130).